Reading from the N-terminus, the 213-residue chain is T-cell surface glycoprotein CD8 beta chain (213 aa).

A signal peptide spans 1–21 (MQPWLWLVFSMKLAALWSSSA). In terms of domain architecture, Ig-like V-type spans 22 to 133 (LIQTPSSLLV…KMVFGTGTKL (112 aa)). Topologically, residues 22–175 (LIQTPSSLLV…QKGLTCSLTT (154 aa)) are extracellular. N-linked (GlcNAc...) asparagine glycosylation occurs at N34. Cysteines 41 and 117 form a disulfide. Residues 176–196 (LSLLVVCILLLLAFLGVAVYF) form a helical membrane-spanning segment. Topologically, residues 197–213 (YCVRRRARIHFMKQFHK) are cytoplasmic.

In terms of assembly, forms disulfide-linked heterodimers with CD8A at the cell surface. Interacts with CD3D; this interaction couples TCR-CD3 with CD8. Interacts with LCK. Palmitoylated at the cytoplasmic tail and thereby targets the heterodimer CD8A/CD8B to lipid rafts unlike CD8A homodimers.

It localises to the membrane. Integral membrane glycoprotein that plays an essential role in the immune response and serves multiple functions in responses against both external and internal offenses. In T-cells, functions primarily as a coreceptor for MHC class I molecule:peptide complex. The antigens presented by class I peptides are derived from cytosolic proteins while class II derived from extracellular proteins. Interacts simultaneously with the T-cell receptor (TCR) and the MHC class I proteins presented by antigen presenting cells (APCs). In turn, recruits the Src kinase LCK to the vicinity of the TCR-CD3 complex. A palmitoylation site in the cytoplasmic tail of CD8B chain contributes to partitioning of CD8 into the plasma membrane lipid rafts where signaling proteins are enriched. Once LCK recruited, it initiates different intracellular signaling pathways by phosphorylating various substrates ultimately leading to lymphokine production, motility, adhesion and activation of cytotoxic T-lymphocytes (CTLs). Additionally, plays a critical role in thymic selection of CD8+ T-cells. This chain is T-cell surface glycoprotein CD8 beta chain (Cd8b), found in Mus musculus (Mouse).